Here is a 257-residue protein sequence, read N- to C-terminus: MEAYLVEMYHGVPYTAAVQLNLVEKHSANISLTVWIPMFQTSLPKNSVMDLLHDVTVICTQISTVHGPMIKVDLSSSNAGLATMPRQFLINAIIALDDWGNMDYEVPVAFDKKSFCVTILKPKNMLYTVPSITPTNRPTHELIAVCSFHNRVTLKSFNIPVFIRALYIRQQGLDSVEQAISSDVDHAITTARVAPYAGLTLVINITSTKGAFKLLKAGSQILAELGPYLTQVSLHDVIMNWKHTGTSYILKSSSTSG.

Residues 193 to 205 (VAPYAGLTLVINI) carry the Nuclear export signal motif.

Belongs to the pneumovirinae M protein family. As to quaternary structure, forms dimers. Forms higher-order oligomers. Interacts with glycoprotein G (via N-terminus). Interacts with protein M2-1; this interaction directs the matrix protein localization to cytoplasmic inclusions comprising viral proteins L, N, P, and M2-1 and mediates the matrix protein association with the nucleocapsid.

Its subcellular location is the virion. The protein resides in the host cytoplasm. It localises to the host nucleus. It is found in the host cell membrane. Functionally, plays a crucial role in virus assembly into filaments and budding. Early in infection, localizes in the nucleus where it may inhibit host cell transcription. Later in infection, traffics to the cytoplasm to associate with inclusion bodies, the site of viral transcription and replication. During virus assembly and budding, acts as a bridge between the nucleocapsid and the lipid bilayer. The chain is Matrix protein (M) from Murine pneumonia virus (strain 15) (MPV).